Reading from the N-terminus, the 374-residue chain is Nucleosome assembly protein 1;1 (374 aa).

Positions 26–80 (VNALKNKLQDITGKPTNVLECLSPNVRKRVEVLKEIQSQHDELEAKFYEERAVLE) form a coiled coil. A Nuclear export signal motif is present at residues 47–62 (LSPNVRKRVEVLKEIQ). A Nuclear localization signal motif is present at residues 223-228 (KKKPKK). The span at 299–339 (AAEDDFADLEDDDDDDEEDDDDEDEEEEDDEDDEDEEDEDD) shows a compositional bias: acidic residues. Positions 299–374 (AAEDDFADLE…GERPPECKQQ (76 aa)) are disordered. Basic residues predominate over residues 343-355 (KKKSSAVRKRGVR). A Cysteine methyl ester modification is found at cysteine 371. The S-farnesyl cysteine moiety is linked to residue cysteine 371. Positions 372–374 (KQQ) are cleaved as a propeptide — removed in mature form.

Belongs to the nucleosome assembly protein (NAP) family. In terms of assembly, binds preferentially histones H4 and H1 in vitro. Interacts with CYCB1;1.

It is found in the nucleus. The protein localises to the cytoplasm. May modulate chromatin structure by regulation of nucleosome assembly/disassembly. Could function together with B-type cyclins in the regulation of microtubule dynamics. This is Nucleosome assembly protein 1;1 (NAP1;1) from Nicotiana tabacum (Common tobacco).